We begin with the raw amino-acid sequence, 517 residues long: Perilipin-1 (517 aa).

Ser81 is modified (phosphoserine). Thr85 carries the phosphothreonine modification. Ser126, Ser130, Ser132, Ser137, and Ser174 each carry phosphoserine. Residues 197–217 (VESAPSSGRQKTQKAPKAKPS) are disordered. A phosphothreonine mark is found at Thr224, Thr299, and Thr301. The interval 285-321 (HNLAASKDENHEDQTDTEGEETDEEEEEEESEAEENV) is disordered. Positions 291–322 (KDENHEDQTDTEGEETDEEEEEEESEAEENVL) are required for interaction with CIDEC. Residues 299 to 319 (TDTEGEETDEEEEEEESEAEE) show a composition bias toward acidic residues. Residues Ser315, Ser385, Ser387, Pro408, Ser411, Ser434, Ser436, Ser440, Ser460, Ser492, and Ser494 each carry the phosphoserine modification. Residues 415–495 (PESEFQDIDN…KPARRVSDSF (81 aa)) are disordered. A compositionally biased stretch (basic and acidic residues) spans 483–492 (PREKPARRVS).

This sequence belongs to the perilipin family. Interacts with ABHD5. Interacts with CIDEC. Interacts with AQP7. Major cAMP-dependent protein kinase substrate in adipocytes, also dephosphorylated by PP1. When phosphorylated, may be maximally sensitive to HSL. When unphosphorylated, may play a role in the inhibition of lipolysis, by acting as a barrier in lipid droplet. In terms of processing, the N-terminus is blocked. In terms of tissue distribution, adipocytes.

It localises to the endoplasmic reticulum. Its subcellular location is the lipid droplet. Functionally, modulator of adipocyte lipid metabolism. Coats lipid storage droplets to protect them from breakdown by hormone-sensitive lipase (HSL). Its absence may result in leanness. Plays a role in unilocular lipid droplet formation by activating CIDEC. Their interaction promotes lipid droplet enlargement and directional net neutral lipid transfer. May modulate lipolysis and triglyceride levels. The polypeptide is Perilipin-1 (Plin1) (Rattus norvegicus (Rat)).